Consider the following 334-residue polypeptide: Beta-ketoacyl-[acyl-carrier-protein] synthase III (334 aa).

Catalysis depends on residues Cys114 and His260. The interval 261 to 265 is ACP-binding; sequence QANLR. Asn290 is a catalytic residue.

The protein belongs to the thiolase-like superfamily. FabH family. In terms of assembly, homodimer.

The protein localises to the cytoplasm. The catalysed reaction is malonyl-[ACP] + acetyl-CoA + H(+) = 3-oxobutanoyl-[ACP] + CO2 + CoA. Its pathway is lipid metabolism; fatty acid biosynthesis. Catalyzes the condensation reaction of fatty acid synthesis by the addition to an acyl acceptor of two carbons from malonyl-ACP. Catalyzes the first condensation reaction which initiates fatty acid synthesis and may therefore play a role in governing the total rate of fatty acid production. Possesses both acetoacetyl-ACP synthase and acetyl transacylase activities. Its substrate specificity determines the biosynthesis of branched-chain and/or straight-chain of fatty acids. The sequence is that of Beta-ketoacyl-[acyl-carrier-protein] synthase III from Clostridium tetani (strain Massachusetts / E88).